We begin with the raw amino-acid sequence, 326 residues long: Photosystem II assembly factor Ycf39 (326 aa).

The protein belongs to the NmrA-type oxidoreductase family. Ycf39 subfamily. In terms of assembly, purified in several chlorophyll- and carotenoid-containing complexes, including photosystem II (PSII) assembly intermediate complex RCII* (iD1, D1, D2, PsbE, PsbF, PsbI, Ycf39, Ycf48, HliC and HliD) and the Ycf39-Hlip complex (Ycf39, HliC, HliD and pigments). Tagged protein does not pull down mature PSII.

The protein resides in the cellular thylakoid membrane. Functionally, requires HliD to bind pigments. The Ycf39-Hlip complex binds D1 at an early stage of PSII assembly along with Ycf48, ribosomes and ChlG, the last enzyme in chlorophyll biosynthesis; it may be involved in chlorophyll reuse and delivery to D1 in the initial stages of PSII assembly. The Ycf39-Hlip complex efficiently quenches chlorophyll fluorescence, contributing to photoprotection. This chain is Photosystem II assembly factor Ycf39, found in Synechocystis sp. (strain ATCC 27184 / PCC 6803 / Kazusa).